A 208-amino-acid chain; its full sequence is Uracil phosphoribosyltransferase (208 aa).

5-phospho-alpha-D-ribose 1-diphosphate-binding positions include arginine 78, arginine 103, and 130 to 138; that span reads DPMLATGGS. Residues isoleucine 193 and 198–200 contribute to the uracil site; that span reads GDA. Aspartate 199 provides a ligand contact to 5-phospho-alpha-D-ribose 1-diphosphate.

The protein belongs to the UPRTase family. Requires Mg(2+) as cofactor.

It carries out the reaction UMP + diphosphate = 5-phospho-alpha-D-ribose 1-diphosphate + uracil. The protein operates within pyrimidine metabolism; UMP biosynthesis via salvage pathway; UMP from uracil: step 1/1. Allosterically activated by GTP. Catalyzes the conversion of uracil and 5-phospho-alpha-D-ribose 1-diphosphate (PRPP) to UMP and diphosphate. This chain is Uracil phosphoribosyltransferase, found in Escherichia fergusonii (strain ATCC 35469 / DSM 13698 / CCUG 18766 / IAM 14443 / JCM 21226 / LMG 7866 / NBRC 102419 / NCTC 12128 / CDC 0568-73).